Here is a 423-residue protein sequence, read N- to C-terminus: T-box transcription factor T-A (423 aa).

Residues 44–212 (LWTKFKELTN…HNPFAKAFLD (169 aa)) constitute a DNA-binding region (T-box). Basic and acidic residues predominate over residues 215–227 (ERSDHKEVPDHST). Disordered regions lie at residues 215–234 (ERSD…QSGY) and 280–304 (AAPY…SSGS). Residues 290 to 304 (RSTTTNNYMDNSSGS) are compositionally biased toward polar residues.

As to quaternary structure, monomer. Binds DNA as a monomer. As to expression, first expressed at the dorsal side of the blastula embryo. Expressed in the germ ring, shield and chordamesoderm during gastrulation and is restricted to the notochord and tailbud during somitogenesis (at protein level).

It localises to the nucleus. In terms of biological role, involved in the transcriptional regulation of genes required for mesoderm differentiation, including itself. Indispensable for the formation of the notochord and the tail structure. Functions together with tbx16/spadetail in development of trunk and tail mesoderm. Functions by itself early in development to repress medial floor plate and promote notochord fate but at later times, functions together with tbx16/spadetail to promote medial floor plate formation. Acts in a parallel pathway to, but cooperates with, non-canonical wnt-signaling during tail formation. Required for the morphogenesis of Kupffer's vesicle and regulates left-right asymmetry. The protein is T-box transcription factor T-A (tbxta) of Danio rerio (Zebrafish).